Consider the following 192-residue polypeptide: Putative B3 domain-containing protein At4g03160 (192 aa).

Residues 22-44 are disordered; that stretch reads VFFDQEEEEEDEEEEYDEESVCE. Positions 25–44 are enriched in acidic residues; it reads DQEEEEEDEEEEYDEESVCE. The segment at residues 75–173 is a DNA-binding region (TF-B3); it reads KDNQYRLMLG…EICFAIDSTR (99 aa).

It is found in the nucleus. The chain is Putative B3 domain-containing protein At4g03160 from Arabidopsis thaliana (Mouse-ear cress).